Consider the following 183-residue polypeptide: MVNLRLQVAVVGAPTVGKTAFVQMLHSNGTTFPKNYLMTLGCDFIVKEVPVDDDNTVEMIIFDVSGQREYEPMVSSYLQNTAVFIVMYDVSNKVTFEACARWVNQVRTNSKESVGILIANKSDLSDKAEVTDRQGKDLANANKMKFYKISTLRGVGITEPIDEIARHYVDAYQKRIEQLTQMR.

GTP is bound by residues 12–19 (GAPTVGKT), 63–67 (DVSGQ), and 120–123 (NKSD).

It belongs to the small GTPase superfamily. Rab family. As to quaternary structure, component of the IFT complex B.

It is found in the cell projection. The protein resides in the cilium. The protein localises to the flagellum. Functionally, small GTPase-like component of the intraflagellar transport (IFT) complex B required for both anterograde and retrograde intraflagellar transport. May be involved in cargo loading of the retrograde transport. This chain is Intraflagellar transport protein 27 homolog, found in Trypanosoma brucei brucei (strain 927/4 GUTat10.1).